The chain runs to 377 residues: Protein FAM199X-B (377 aa).

Basic and acidic residues predominate over residues 240-254 (KEHSPRQRCTRESWK). Residues 240–350 (KEHSPRQRCT…EQRQARKERI (111 aa)) are disordered. Positions 256–301 (TSYSTASTSGVSGASVSSSSASMVSTASSTGSSGGNSASNSSANMS) are enriched in low complexity. The segment covering 319-338 (DSKKRSKQRKLQQKALRKRQ) has biased composition (basic residues). The stretch at 321–349 (KKRSKQRKLQQKALRKRQLKEQRQARKER) forms a coiled coil. The segment covering 339-350 (LKEQRQARKERI) has biased composition (basic and acidic residues).

This sequence belongs to the FAM199 family.

The protein is Protein FAM199X-B (fam199x-b) of Xenopus laevis (African clawed frog).